A 599-amino-acid chain; its full sequence is Prostaglandin G/H synthase 1 (599 aa).

The N-terminal stretch at 1–23 (MSRSLLLWFLLFLLLLPPLPVLL) is a signal peptide. An EGF-like domain is found at 31–69 (PVNPCCYYPCQHQGICVRFGLDRYQCDCTRTGYSGPNCT). Intrachain disulfides connect Cys35–Cys46, Cys36–Cys158, Cys40–Cys56, and Cys58–Cys68. Asn67, Asn103, and Asn143 each carry an N-linked (GlcNAc...) asparagine glycan. The active-site Proton acceptor is the His206. The active-site For cyclooxygenase activity is the Tyr384. His387 lines the heme b pocket. A disulfide bridge connects residues Cys568 and Cys574.

Belongs to the prostaglandin G/H synthase family. Homodimer. The cofactor is heme b.

It localises to the microsome membrane. The protein localises to the endoplasmic reticulum membrane. The catalysed reaction is (5Z,8Z,11Z,14Z)-eicosatetraenoate + AH2 + 2 O2 = prostaglandin H2 + A + H2O. The enzyme catalyses (5Z,8Z,11Z,14Z)-eicosatetraenoate + 2 O2 = prostaglandin G2. It catalyses the reaction prostaglandin G2 + AH2 = prostaglandin H2 + A + H2O. It carries out the reaction (9Z,12Z)-octadecadienoate + AH2 + O2 = (9R)-hydroxy-(10E,12Z)-octadecadienoate + A + H2O. The catalysed reaction is (9Z,12Z)-octadecadienoate + AH2 + O2 = (9S)-hydroxy-(10E,12Z)-octadecadienoate + A + H2O. The enzyme catalyses (9Z,12Z)-octadecadienoate + AH2 + O2 = (13S)-hydroxy-(9Z,11E)-octadecadienoate + A + H2O. It catalyses the reaction (9Z,12Z)-octadecadienoate + AH2 + O2 = (13R)-hydroxy-(9Z,11E)-octadecadienoate + A + H2O. It functions in the pathway lipid metabolism; prostaglandin biosynthesis. The cyclooxygenase activity is inhibited by nonsteroidal anti-inflammatory drugs (NSAIDs) including ibuprofen, flurbiprofen, ketoprofen, naproxen, flurbiprofen, anirolac, fenclofenac and diclofenac. Functionally, dual cyclooxygenase and peroxidase that plays an important role in the biosynthesis pathway of prostanoids, a class of C20 oxylipins mainly derived from arachidonate ((5Z,8Z,11Z,14Z)-eicosatetraenoate, AA, C20:4(n-6)), with a particular role in the inflammatory response. The cyclooxygenase activity oxygenates AA to the hydroperoxy endoperoxide prostaglandin G2 (PGG2), and the peroxidase activity reduces PGG2 to the hydroxy endoperoxide prostaglandin H2 (PGH2), the precursor of all 2-series prostaglandins and thromboxanes. This complex transformation is initiated by abstraction of hydrogen at carbon 13 (with S-stereochemistry), followed by insertion of molecular O2 to form the endoperoxide bridge between carbon 9 and 11 that defines prostaglandins. The insertion of a second molecule of O2 (bis-oxygenase activity) yields a hydroperoxy group in PGG2 that is then reduced to PGH2 by two electrons. Involved in the constitutive production of prostanoids in particular in the stomach and platelets. In gastric epithelial cells, it is a key step in the generation of prostaglandins, such as prostaglandin E2 (PGE2), which plays an important role in cytoprotection. In platelets, it is involved in the generation of thromboxane A2 (TXA2), which promotes platelet activation and aggregation, vasoconstriction and proliferation of vascular smooth muscle cells. Can also use linoleate (LA, (9Z,12Z)-octadecadienoate, C18:2(n-6)) as substrate and produce hydroxyoctadecadienoates (HODEs) in a regio- and stereospecific manner, being (9R)-HODE ((9R)-hydroxy-(10E,12Z)-octadecadienoate) and (13S)-HODE ((13S)-hydroxy-(9Z,11E)-octadecadienoate) its major products. This is Prostaglandin G/H synthase 1 from Homo sapiens (Human).